Consider the following 131-residue polypeptide: D-ribose pyranase (131 aa).

The active-site Proton donor is the His-20. Residues Asp-28, His-98, and 120-122 (YSN) each bind substrate.

It belongs to the RbsD / FucU family. RbsD subfamily. In terms of assembly, homodecamer.

It localises to the cytoplasm. It catalyses the reaction beta-D-ribopyranose = beta-D-ribofuranose. It functions in the pathway carbohydrate metabolism; D-ribose degradation; D-ribose 5-phosphate from beta-D-ribopyranose: step 1/2. Functionally, catalyzes the interconversion of beta-pyran and beta-furan forms of D-ribose. This Limosilactobacillus fermentum (strain NBRC 3956 / LMG 18251) (Lactobacillus fermentum) protein is D-ribose pyranase.